A 326-amino-acid chain; its full sequence is Sucrose operon repressor (326 aa).

The HTH lacI-type domain maps to 1–57; sequence MKPKLNDVAKLAGVSATTVSRVINNHGYLSSQTKEKVFAAMRELHYQPNNMARSLQG. Positions 5–24 form a DNA-binding region, H-T-H motif; sequence LNDVAKLAGVSATTVSRVIN.

In terms of biological role, negative regulator of scrB expression. This is Sucrose operon repressor (scrR) from Pediococcus pentosaceus.